Consider the following 113-residue polypeptide: Cell division topological specificity factor (113 aa).

Belongs to the MinE family.

Functionally, prevents the cell division inhibition by proteins MinC and MinD at internal division sites while permitting inhibition at polar sites. This ensures cell division at the proper site by restricting the formation of a division septum at the midpoint of the long axis of the cell. The chain is Cell division topological specificity factor from Methylobacterium radiotolerans (strain ATCC 27329 / DSM 1819 / JCM 2831 / NBRC 15690 / NCIMB 10815 / 0-1).